The sequence spans 137 residues: Large ribosomal subunit protein uL16 (137 aa).

It belongs to the universal ribosomal protein uL16 family. As to quaternary structure, part of the 50S ribosomal subunit.

In terms of biological role, binds 23S rRNA and is also seen to make contacts with the A and possibly P site tRNAs. The protein is Large ribosomal subunit protein uL16 of Aromatoleum aromaticum (strain DSM 19018 / LMG 30748 / EbN1) (Azoarcus sp. (strain EbN1)).